The sequence spans 178 residues: Large ribosomal subunit protein uL6 (178 aa).

This sequence belongs to the universal ribosomal protein uL6 family. In terms of assembly, part of the 50S ribosomal subunit.

Its function is as follows. This protein binds to the 23S rRNA, and is important in its secondary structure. It is located near the subunit interface in the base of the L7/L12 stalk, and near the tRNA binding site of the peptidyltransferase center. The polypeptide is Large ribosomal subunit protein uL6 (Leuconostoc mesenteroides subsp. mesenteroides (strain ATCC 8293 / DSM 20343 / BCRC 11652 / CCM 1803 / JCM 6124 / NCDO 523 / NBRC 100496 / NCIMB 8023 / NCTC 12954 / NRRL B-1118 / 37Y)).